A 106-amino-acid chain; its full sequence is Colipase A (106 aa).

The first 11 residues, 1-11, serve as a signal peptide directing secretion; sequence LLLVALAVAYA. The propeptide at 12 to 16 is enterostatin, activation peptide; sequence VPDPR. 5 disulfide bridges follow: Cys-28-Cys-39, Cys-34-Cys-50, Cys-38-Cys-72, Cys-60-Cys-80, and Cys-74-Cys-98. A taurodeoxycholate-binding site is contributed by Trp-63.

The protein belongs to the colipase family. As to quaternary structure, forms a 1:1 stoichiometric complex with pancreatic lipase. In terms of tissue distribution, expressed by the pancreas.

It localises to the secreted. Its function is as follows. Colipase is a cofactor of pancreatic lipase. It allows the lipase to anchor itself to the lipid-water interface. Without colipase the enzyme is washed off by bile salts, which have an inhibitory effect on the lipase. In terms of biological role, enterostatin has a biological activity as a satiety signal. This chain is Colipase A (CLPS1), found in Equus caballus (Horse).